A 221-amino-acid chain; its full sequence is N-acetyltransferase 8F1 (221 aa).

Residues 53–73 (LVLVSGSWLLAVVCIFFLLLL) traverse the membrane as a helical segment. Residues 69–219 (FLLLLLRFLA…RTIQLKYPFP (151 aa)) enclose the N-acetyltransferase domain.

The protein belongs to the camello family.

It localises to the membrane. Its function is as follows. May play a role in regulation of gastrulation. This Rattus norvegicus (Rat) protein is N-acetyltransferase 8F1.